A 350-amino-acid chain; its full sequence is Bifunctional methylenetetrahydrofolate dehydrogenase/cyclohydrolase, mitochondrial (350 aa).

The transit peptide at 1–35 (MASVSLLSALAVRLLRPTHGCHPRLQPFHLAAVRN) directs the protein to the mitochondrion. At Lys-50 the chain carries N6-acetyllysine; alternate. Residue Lys-50 forms a Glycyl lysine isopeptide (Lys-Gly) (interchain with G-Cter in SUMO2); alternate linkage. Substrate-binding positions include 84 to 88 (YVLNK) and 131 to 133 (VQL). Residues 200 to 202 (GRS) and Arg-233 each bind NAD(+). 309-313 (PGGVG) contributes to the substrate binding site.

The protein belongs to the tetrahydrofolate dehydrogenase/cyclohydrolase family. In terms of assembly, homodimer. Requires Mg(2+) as cofactor.

It is found in the mitochondrion. It catalyses the reaction (6R)-5,10-methylene-5,6,7,8-tetrahydrofolate + NAD(+) = (6R)-5,10-methenyltetrahydrofolate + NADH. It carries out the reaction (6R)-5,10-methenyltetrahydrofolate + H2O = (6R)-10-formyltetrahydrofolate + H(+). Functionally, although its dehydrogenase activity is NAD-specific, it can also utilize NADP at a reduced efficiency. This is Bifunctional methylenetetrahydrofolate dehydrogenase/cyclohydrolase, mitochondrial (Mthfd2) from Mus musculus (Mouse).